Here is a 117-residue protein sequence, read N- to C-terminus: MLSLTYIVGIASALVIILLLVGLHLPSVMPDNEKLSAYECGFDPMGNARLPFSLRFFLVAILFLLFDLEIALILPYPLGVVFSENTFYNYWLVMLLVVVLTFGLMYEWLKGGLEWTE.

Helical transmembrane passes span 1–21 (MLSL…LLLV), 56–76 (FFLV…ILPY), and 86–106 (TFYN…GLMY).

This sequence belongs to the complex I subunit 3 family.

It is found in the mitochondrion membrane. It catalyses the reaction a ubiquinone + NADH + 5 H(+)(in) = a ubiquinol + NAD(+) + 4 H(+)(out). Core subunit of the mitochondrial membrane respiratory chain NADH dehydrogenase (Complex I) that is believed to belong to the minimal assembly required for catalysis. Complex I functions in the transfer of electrons from NADH to the respiratory chain. The immediate electron acceptor for the enzyme is believed to be ubiquinone. In Branchiostoma lanceolatum (Common lancelet), this protein is NADH-ubiquinone oxidoreductase chain 3 (ND3).